An 85-amino-acid chain; its full sequence is N.vectensis toxin 1 4 (85 aa).

The N-terminal stretch at 1–20 (MASFKIVIVCLALLVAVASA) is a signal peptide. A propeptide spanning residues 21–36 (RRRDMMSDDELDYHYS) is cleaved from the precursor. Intrachain disulfides connect cysteine 42/cysteine 82, cysteine 44/cysteine 72, and cysteine 65/cysteine 83.

It belongs to the sea anemone sodium channel inhibitory toxin family. Type II subfamily. Expressed in ectodermal glands and in clumps outside of the extodermal layer. Is not expressed in nematocytes. In adult female tissues, shows similar expression levels in mesenteries (gametes-producing tissue), tentacles, pharynx and physa.

It is found in the secreted. In terms of biological role, binds to site 3 of voltage-gated sodium channels and inhibits the inactivation process. Is highly active on DmNav1/TipE (drosophila) and is only extremely weakly active on rat Nav1.4-beta-1/SCN4A-SCN1B, and on human Nav1.5-beta-1/SCN5A-beta-1. This reveals high specificity for arthropod over mammalian channels. In vivo, when released into the medium, this recombinant toxin induces impaired swimming, paralysis and death of the crustacean A.nauplii within several hours. Also causes paralysis of cherry shrimps immediately after injection at very low doses. Its effect on zebrafish (D.rerio) larvae is also rapid, since it induces tail twitching accompanied by impaired swimming after 20 minutes and complete paralysis within 45 minutes. It has also been observed to cause death of zebrafish larvae within 1 hour. This Nematostella vectensis (Starlet sea anemone) protein is N.vectensis toxin 1 4.